The primary structure comprises 529 residues: AAA ATPase forming ring-shaped complexes (529 aa).

Residues 15-62 are a coiled coil; it reads MERQDERLRSLSEANDRLMAKNHALAKALTRATQELTKAKAQLNQLAG. 253 to 258 is a binding site for ATP; it reads GNGKTL.

Belongs to the AAA ATPase family. As to quaternary structure, homohexamer. Assembles into a hexameric ring structure.

The protein is AAA ATPase forming ring-shaped complexes of Bifidobacterium dentium (strain ATCC 27534 / DSM 20436 / JCM 1195 / Bd1).